The chain runs to 155 residues: MLSVMAATLNYIDEQVKGGLILPYFEDIDAEQWQEKIKVLDIYITDEVEGRELNLEARQKDYATNILSYPSDLPAAIIGLMPTLPLGELIICHAVMIREAAEQNKEAVQHISHLLIHGVLHLLGFDHELGQAEQDEMERFEIEILAGLNIPNPYN.

Zn(2+)-binding residues include His117, His121, and His127.

The protein belongs to the endoribonuclease YbeY family. It depends on Zn(2+) as a cofactor.

It localises to the cytoplasm. Functionally, single strand-specific metallo-endoribonuclease involved in late-stage 70S ribosome quality control and in maturation of the 3' terminus of the 16S rRNA. In Psychrobacter cryohalolentis (strain ATCC BAA-1226 / DSM 17306 / VKM B-2378 / K5), this protein is Endoribonuclease YbeY.